The chain runs to 372 residues: Bifunctional coenzyme PQQ synthesis protein C/D (372 aa).

Residues 1–267 (MTAQFPPPVP…VAETNSAEDS (267 aa)) are pqqC. The segment at 260–288 (ETNSAEDSPAAAASPAATTAEPTAFSGSD) is disordered. Over residues 264 to 283 (AEDSPAAAASPAATTAEPTA) the composition is skewed to low complexity. The tract at residues 268–280 (PAAAASPAATTAE) is linker. A pqqD region spans residues 281–372 (PTAFSGSDVP…GLAQKRVLER (92 aa)).

It in the N-terminal section; belongs to the PqqC family. This sequence in the C-terminal section; belongs to the PqqD family. Monomer. Interacts with PqqE.

The catalysed reaction is 6-(2-amino-2-carboxyethyl)-7,8-dioxo-1,2,3,4,7,8-hexahydroquinoline-2,4-dicarboxylate + 3 O2 = pyrroloquinoline quinone + 2 H2O2 + 2 H2O + H(+). It participates in cofactor biosynthesis; pyrroloquinoline quinone biosynthesis. In terms of biological role, the PqqC region is involved in ring cyclization and eight-electron oxidation of 3a-(2-amino-2-carboxyethyl)-4,5-dioxo-4,5,6,7,8,9-hexahydroquinoline-7,9-dicarboxylic-acid to PQQ. Its function is as follows. The PqqD region functions as a PqqA binding domain and presents PqqA to PqqE. This Methylorubrum extorquens (strain ATCC 14718 / DSM 1338 / JCM 2805 / NCIMB 9133 / AM1) (Methylobacterium extorquens) protein is Bifunctional coenzyme PQQ synthesis protein C/D (pqqCD).